We begin with the raw amino-acid sequence, 105 residues long: NADH-quinone oxidoreductase subunit K (105 aa).

Helical transmembrane passes span 8–28 (LAAY…GVFL), 34–54 (IILL…LVAF), and 65–85 (VFVF…LAIL).

It belongs to the complex I subunit 4L family. As to quaternary structure, NDH-1 is composed of 14 different subunits. Subunits NuoA, H, J, K, L, M, N constitute the membrane sector of the complex.

The protein localises to the cell inner membrane. The enzyme catalyses a quinone + NADH + 5 H(+)(in) = a quinol + NAD(+) + 4 H(+)(out). Its function is as follows. NDH-1 shuttles electrons from NADH, via FMN and iron-sulfur (Fe-S) centers, to quinones in the respiratory chain. The immediate electron acceptor for the enzyme in this species is believed to be ubiquinone. Couples the redox reaction to proton translocation (for every two electrons transferred, four hydrogen ions are translocated across the cytoplasmic membrane), and thus conserves the redox energy in a proton gradient. The chain is NADH-quinone oxidoreductase subunit K from Acidithiobacillus ferrooxidans (strain ATCC 23270 / DSM 14882 / CIP 104768 / NCIMB 8455) (Ferrobacillus ferrooxidans (strain ATCC 23270)).